Reading from the N-terminus, the 228-residue chain is RING1 and YY1-binding protein (228 aa).

3 disordered regions span residues 1-21, 65-156, and 172-228; these read MTMG…PAAD, QVAQ…RSTA, and DFKE…DESF. The segment at 21 to 50 adopts a RanBP2-type zinc-finger fold; the sequence is DEGFWDCSVCTFRNSAEAFKCSICDVRKGT. Residues 76 to 98 show a composition bias toward basic and acidic residues; it reads PKKEKKEKVEKQDKEKPEKDKEI. A Glycyl lysine isopeptide (Lys-Gly) (interchain with G-Cter in SUMO2) cross-link involves residue lysine 77. Residue serine 99 is modified to Phosphoserine. Basic and acidic residues predominate over residues 113-122; the sequence is PKSDILKDPP. 3 positions are modified to phosphoserine: serine 123, serine 127, and serine 130. The segment covering 124 to 143 has biased composition (polar residues); the sequence is EANSIQSANATTKTSETNHT. The interval 143 to 226 is interaction with GABPB1 and FANK1; it reads TSRPRLKNVD…KGDMSAVNDE (84 aa). Residues 179 to 204 show a composition bias toward low complexity; it reads SSSTSSSTVTSSAGSEQQNQSSSGSE. A Phosphoserine modification is found at serine 227.

As to quaternary structure, monomer. Component of repressive BCOR complex containing Polycomb group subcomplex at least composed of BCOR, PCGF1, RING1 and RNF2/RING2. Component of PCR1-like complexes. Interacts with PCGF1. Part of a PCR1-like complex that contains AUTS2, PCGF5, RNF2, CSNK2B and RYBP. Interacts with RNF2; the interaction is direct. Interacts with CBX2, YAF2, RING1 and RNF2. Interacts with ubiquitin and ubiquitinated proteins. Interacts with ubiquitinated histone H2A. Interacts with apoptin, DEDD, FADD, CASP8, CASP10, YY1 and GABPB1. Together with GABPB1 and YY1, it forms a ternary complex, probably being the bridge factor between these two transcription factors. Interacts with MDM2, and thereby inhibits ubiquitination of TP53. Identified in a ternary complex containing MDM2, TP53 and RYBP. Interacts with FANK1; may prevent the ubiquitin-mediated proteasomal degradation of FANK1. Interacts with IFT57. Monoubiquitinated. In terms of tissue distribution, down-regulated in breast cancer tissues and in several breast cancer cell lines (at protein level). Widely expressed with highest levels in lymphoid tissues and placenta.

The protein resides in the nucleus. The protein localises to the cytoplasm. Its subcellular location is the nucleoplasm. Its function is as follows. Component of a Polycomb group (PcG) multiprotein PRC1-like complex, a complex class required to maintain the transcriptionally repressive state of many genes, including Hox genes, throughout development. PcG PRC1-like complex acts via chromatin remodeling and modification of histones; it mediates monoubiquitination of histone H2A 'Lys-119', rendering chromatin heritably changed in its expressibility. Component of a PRC1-like complex that mediates monoubiquitination of histone H2A 'Lys-119' on the X chromosome and is required for normal silencing of one copy of the X chromosome in XX females. May stimulate ubiquitination of histone H2A 'Lys-119' by recruiting the complex to target sites. Inhibits ubiquitination and subsequent degradation of TP53, and thereby plays a role in regulating transcription of TP53 target genes. May also regulate the ubiquitin-mediated proteasomal degradation of other proteins like FANK1 to regulate apoptosis. May be implicated in the regulation of the transcription as a repressor of the transcriptional activity of E4TF1. May bind to DNA. May play a role in the repression of tumor growth and metastasis in breast cancer by down-regulating SRRM3. The polypeptide is RING1 and YY1-binding protein (RYBP) (Homo sapiens (Human)).